The chain runs to 258 residues: UPF0246 protein YaaA (258 aa).

This sequence belongs to the UPF0246 family.

The polypeptide is UPF0246 protein YaaA (Escherichia coli O45:K1 (strain S88 / ExPEC)).